Here is a 343-residue protein sequence, read N- to C-terminus: Cyclin-Y-like protein 1-B (343 aa).

A disordered region spans residues 1-69 (MGNTVTCCVS…ECNPSDHPQA (69 aa)). The span at 17-28 (AGRDRRVAERGE) shows a compositional bias: basic and acidic residues. Positions 145–267 (DIFDEKLHPL…FLELLQFNIN (123 aa)) constitute a Cyclin N-terminal domain.

Belongs to the cyclin family. Cyclin Y subfamily.

The polypeptide is Cyclin-Y-like protein 1-B (ccnyl1-b) (Xenopus laevis (African clawed frog)).